Reading from the N-terminus, the 154-residue chain is Protein X (154 aa).

Residues 68–117 (PCALRFTSARRMETTVNAHWNLPKVLHKRTLGLSAMSTTDLEAYFKDCVF) form a mitochondrial targeting sequence region.

Belongs to the orthohepadnavirus protein X family. As to quaternary structure, may form homodimer. May interact with host CEBPA, CFLAR, CREB1, DDB1, E4F1, HBXIP, HSPD1/HSP60, NFKBIA, POLR2E and SMAD4. Interacts with host SMC5-SMC6 complex and induces its degradation. Interacts with host TRPC4AP; leading to prevent ubiquitination of TRPC4AP. Interacts with host PLSCR1; this interaction promotes ubiquitination and degradation of HBx and impairs HBx-mediated cell proliferation. A fraction may be phosphorylated in insect cells and HepG2 cells, a human hepatoblastoma cell line. Phosphorylated in vitro by host protein kinase C or mitogen-activated protein kinase. N-acetylated in insect cells.

It localises to the host cytoplasm. The protein resides in the host nucleus. Its subcellular location is the host mitochondrion. Its function is as follows. Multifunctional protein that plays a role in silencing host antiviral defenses and promoting viral transcription. Does not seem to be essential for HBV infection. May be directly involved in development of cirrhosis and liver cancer (hepatocellular carcinoma). Most of cytosolic activities involve modulation of cytosolic calcium. The effect on apoptosis is controversial depending on the cell types in which the studies have been conducted. May induce apoptosis by localizing in mitochondria and causing loss of mitochondrial membrane potential. May also modulate apoptosis by binding host CFLAR, a key regulator of the death-inducing signaling complex (DISC). Promotes viral transcription by using the host E3 ubiquitin ligase DDB1 to target the SMC5-SMC6 complex to proteasomal degradation. This host complex would otherwise bind to viral episomal DNA, and prevents its transcription. Moderately stimulates transcription of many different viral and cellular transcription elements. Promoters and enhancers stimulated by HBx contain DNA binding sites for NF-kappa-B, AP-1, AP-2, c-EBP, ATF/CREB, or the calcium-activated factor NF-AT. The sequence is that of Protein X from Hepatitis B virus genotype B2 (isolate Vietnam/9873/1997) (HBV-B).